The primary structure comprises 339 residues: Beta-ketoacyl-[acyl-carrier-protein] synthase III (339 aa).

Catalysis depends on residues Cys121 and His257. An ACP-binding region spans residues Gln258–Arg262. Asn288 is an active-site residue.

Belongs to the thiolase-like superfamily. FabH family. In terms of assembly, homodimer.

The protein resides in the cytoplasm. The enzyme catalyses malonyl-[ACP] + propanoyl-CoA + H(+) = 3-oxopentanoyl-[ACP] + CO2 + CoA. It catalyses the reaction 2-methylpropanoyl-CoA + malonyl-[ACP] + H(+) = 4-methyl-3-oxopentanoyl-[ACP] + CO2 + CoA. The catalysed reaction is malonyl-[ACP] + acetyl-CoA + H(+) = 3-oxobutanoyl-[ACP] + CO2 + CoA. It carries out the reaction butanoyl-CoA + malonyl-[ACP] + H(+) = 3-oxohexanoyl-[ACP] + CO2 + CoA. Its pathway is lipid metabolism; fatty acid biosynthesis. In terms of biological role, catalyzes the condensation reaction of fatty acid synthesis by the addition to an acyl acceptor of two carbons from malonyl-ACP. Catalyzes the first condensation reaction which initiates fatty acid synthesis and may therefore play a role in governing the total rate of fatty acid production. Possesses both acetoacetyl-ACP synthase and acetyl transacylase activities. Propionyl-CoA and isobutyryl-CoA were the two most preferred substrates, although acetyl-CoA and butyryl-CoA could also be accepted and elongated. Involved in the biosynthesis of R1128 polyketide. The chain is Beta-ketoacyl-[acyl-carrier-protein] synthase III from Streptomyces lividans.